Here is a 503-residue protein sequence, read N- to C-terminus: Maturase K (503 aa).

It belongs to the intron maturase 2 family. MatK subfamily.

The protein localises to the plastid. The protein resides in the chloroplast. Functionally, usually encoded in the trnK tRNA gene intron. Probably assists in splicing its own and other chloroplast group II introns. The sequence is that of Maturase K from Aethionema cordifolium (Lebanon stonecress).